Here is a 416-residue protein sequence, read N- to C-terminus: Tryptophan synthase beta chain (416 aa).

Position 109 is an N6-(pyridoxal phosphate)lysine (Lys-109).

Belongs to the TrpB family. Tetramer of two alpha and two beta chains. Pyridoxal 5'-phosphate is required as a cofactor.

The catalysed reaction is (1S,2R)-1-C-(indol-3-yl)glycerol 3-phosphate + L-serine = D-glyceraldehyde 3-phosphate + L-tryptophan + H2O. It participates in amino-acid biosynthesis; L-tryptophan biosynthesis; L-tryptophan from chorismate: step 5/5. The beta subunit is responsible for the synthesis of L-tryptophan from indole and L-serine. The polypeptide is Tryptophan synthase beta chain (Mesorhizobium japonicum (strain LMG 29417 / CECT 9101 / MAFF 303099) (Mesorhizobium loti (strain MAFF 303099))).